The sequence spans 402 residues: Ferrochelatase, mitochondrial (402 aa).

Residues 1-33 (MAAAGRAARPLVAGGRQLRVPLRWRGQVAAAAP) constitute a mitochondrion transit peptide. Protoporphyrin IX contacts are provided by Arg94, Tyr102, and Ser109. Residue Cys175 coordinates [2Fe-2S] cluster. Catalysis depends on residues His209 and Asp362. Cys382, Cys385, and Cys390 together coordinate [2Fe-2S] cluster.

It belongs to the ferrochelatase family. Homodimer. Homotetramer. It depends on [2Fe-2S] cluster as a cofactor.

It is found in the mitochondrion inner membrane. It carries out the reaction heme b + 2 H(+) = protoporphyrin IX + Fe(2+). It functions in the pathway porphyrin-containing compound metabolism; protoheme biosynthesis; protoheme from protoporphyrin-IX: step 1/1. In terms of biological role, catalyzes the ferrous insertion into protoporphyrin IX. This is Ferrochelatase, mitochondrial from Gallus gallus (Chicken).